The primary structure comprises 97 residues: DNA/RNA-binding protein Alba (97 aa).

At Lys-15 the chain carries N6-acetyllysine.

Belongs to the histone-like Alba family. In terms of processing, acetylated. Acetylation at Lys-15 decreases DNA-binding affinity.

Its subcellular location is the cytoplasm. The protein localises to the chromosome. Binds double-stranded DNA tightly but without sequence specificity. Involved in DNA compaction. This Ignicoccus hospitalis (strain KIN4/I / DSM 18386 / JCM 14125) protein is DNA/RNA-binding protein Alba.